We begin with the raw amino-acid sequence, 309 residues long: Homoserine O-succinyltransferase (309 aa).

Cys142 functions as the Acyl-thioester intermediate in the catalytic mechanism. Lys163 and Ser192 together coordinate substrate. His235 serves as the catalytic Proton acceptor. Glu237 is a catalytic residue. Arg249 provides a ligand contact to substrate.

It belongs to the MetA family.

The protein resides in the cytoplasm. It carries out the reaction L-homoserine + succinyl-CoA = O-succinyl-L-homoserine + CoA. Its pathway is amino-acid biosynthesis; L-methionine biosynthesis via de novo pathway; O-succinyl-L-homoserine from L-homoserine: step 1/1. Its function is as follows. Transfers a succinyl group from succinyl-CoA to L-homoserine, forming succinyl-L-homoserine. The polypeptide is Homoserine O-succinyltransferase (Edwardsiella ictaluri (strain 93-146)).